Consider the following 458-residue polypeptide: Probable alpha-L-glutamate ligase (458 aa).

Residues 1-162 (MSDNKFIIGS…YGVKSAKKSG (162 aa)) form a unknown region. Residues 163–458 (LKIGLLASNP…IEKKLGWKAE (296 aa)) form an alpha-L-glutamate ligase region. Residues 267-450 (LQLLQKNNLD…IAGAMIDSIE (184 aa)) form the ATP-grasp domain. ATP contacts are provided by residues Lys-304, 341 to 342 (EF), Asp-350, and 374 to 376 (RAN). Mg(2+) is bound by residues Asp-411, Glu-423, and Asn-425. Mn(2+) contacts are provided by Asp-411, Glu-423, and Asn-425.

This sequence in the C-terminal section; belongs to the RimK family. Mg(2+) serves as cofactor. Mn(2+) is required as a cofactor.

The chain is Probable alpha-L-glutamate ligase from Shewanella halifaxensis (strain HAW-EB4).